The primary structure comprises 229 residues: MAKKSKALRAAIEKIDATKLYSVEEAVALAKETSFAKFDATVEVAYNLNIDVKKSDQQIRGAMVLPNGTGKTARVLVFAKGAKAEEATAAGADFVGSDELVAKINGGWLDFDVVIATPDMMAVVGRLGRVLGPRNLMPNPKTGTVTMDVTKAVEESKAGKVNYRADKAGNVHVPIGKVSFDTEKLVENFKALNSVIAAAKPAASKGAYITNLSVTTTMGPGVKVDSASF.

Belongs to the universal ribosomal protein uL1 family. As to quaternary structure, part of the 50S ribosomal subunit.

Its function is as follows. Binds directly to 23S rRNA. The L1 stalk is quite mobile in the ribosome, and is involved in E site tRNA release. Protein L1 is also a translational repressor protein, it controls the translation of the L11 operon by binding to its mRNA. In Lactococcus lactis subsp. lactis (strain IL1403) (Streptococcus lactis), this protein is Large ribosomal subunit protein uL1.